We begin with the raw amino-acid sequence, 115 residues long: Large ribosomal subunit protein bL20 (115 aa).

The protein belongs to the bacterial ribosomal protein bL20 family.

Functionally, binds directly to 23S ribosomal RNA and is necessary for the in vitro assembly process of the 50S ribosomal subunit. It is not involved in the protein synthesizing functions of that subunit. The protein is Large ribosomal subunit protein bL20 of Mycoplasmoides gallisepticum (strain R(low / passage 15 / clone 2)) (Mycoplasma gallisepticum).